A 142-amino-acid polypeptide reads, in one-letter code: Glia maturation factor gamma (142 aa).

The residue at position 2 (serine 2) is an N-acetylserine. Positions 4-139 (SLVVCDVDPE…NETWLKEKLA (136 aa)) constitute an ADF-H domain.

It belongs to the actin-binding proteins ADF family. GMF subfamily. Expressed in rat thymus, testis, and spleen. Is present predominantly in proliferative and differentiative organs.

The chain is Glia maturation factor gamma (Gmfg) from Rattus norvegicus (Rat).